Reading from the N-terminus, the 684-residue chain is Poly(A) RNA polymerase cid14 (684 aa).

Disordered stretches follow at residues 1–52 (MGKK…DAYD), 64–127 (DQEE…KRGE), and 161–219 (WNSD…QAYE). Composition is skewed to basic and acidic residues over residues 19 to 35 (ERTE…DKPS), 73 to 91 (GSKK…DKGG), 108 to 127 (DPLE…KRGE), 171 to 186 (SNDK…KSSK), and 199 to 210 (FFHEANEKSDSN). Residues Asp298 and Asp300 each contribute to the Mg(2+) site. 6 residues coordinate ATP: Gly364, Lys389, Ser407, Tyr408, Asn492, and Lys496. A PAP-associated domain is found at 434-492 (NFGVLLLEFLELYGKQFYYDAVGIAVHNGGFYFSKKKMGWLKPNQPYLLSIQDPVDFQN). The interval 623–684 (GHENFQKQAL…SRAKKIRKRF (62 aa)) is disordered. Over residues 628–655 (QKQALTSTGEQSSSNSRANPSKLFNISS) the composition is skewed to polar residues. The segment covering 656–672 (DDSEDEVPIIEDTTASD) has biased composition (acidic residues).

It belongs to the DNA polymerase type-B-like family. Heterooligomer. Component of the TRAMP complex composed of at least cid14, mtr4, and air1. Requires Mg(2+) as cofactor. Mn(2+) is required as a cofactor.

Its subcellular location is the nucleus. The protein localises to the nucleolus. The enzyme catalyses RNA(n) + ATP = RNA(n)-3'-adenine ribonucleotide + diphosphate. Its function is as follows. Required for 3' polyadenylation of the 5.8S and 25S rRNAs as a prelude to their degradation in the exosome. Involved in the nucleolar organization to ensure faithful chromosome segregation during mitosis. The sequence is that of Poly(A) RNA polymerase cid14 (cid14) from Schizosaccharomyces pombe (strain 972 / ATCC 24843) (Fission yeast).